The following is a 136-amino-acid chain: uncharacterized protein (136 aa).

The helical transmembrane segment at 40–62 (LFYSISLCVSLLLHISLCVSVYV) threads the bilayer.

It is found in the membrane. This is an uncharacterized protein from Homo sapiens (Human).